The primary structure comprises 182 residues: Protein YIPF6 homolog (182 aa).

Residues 1–45 (MIESENPNTLDEPVIQTILRDLKMIGFKLYHVILPRGNAANVLRD) are Cytoplasmic-facing. Residues 46–66 (WDLWGPLILCLVMAIFLSISA) form a helical membrane-spanning segment. The Lumenal portion of the chain corresponds to 67 to 70 (EEQK). A helical transmembrane segment spans residues 71–91 (ALEFTIVFVVVWCGAAIVTVN). Residues 92–104 (GQLLCGNISFFQS) lie on the Cytoplasmic side of the membrane. The helical transmembrane segment at 105 to 125 (VCILGYCIFPLTIATIIIWII) threads the bilayer. Over 126–133 (QNFTMIVK) the chain is Lumenal. A helical membrane pass occupies residues 134-154 (LPIVGGAWFWSSFASYGFLGS). Residues 155-161 (SVPESRR) lie on the Cytoplasmic side of the membrane. Residues 162-182 (LLAVYPVLLFYLVIAWLVVVQ) traverse the membrane as a helical segment.

The protein belongs to the YIP1 family.

It is found in the golgi apparatus membrane. This chain is Protein YIPF6 homolog (yipf6), found in Dictyostelium discoideum (Social amoeba).